The chain runs to 453 residues: Nuclear distribution protein PAC1 (453 aa).

The LisH domain maps to 19-51; that stretch reads QKDELHKSILDYFKTNNLHESFATLMREANQEG. The stretch at 69-96 forms a coiled coil; it reads TSVIRLQKKIMEMESRISQLQEELSAAP. 7 WD repeats span residues 120–161, 162–201, 205–244, 247–286, 314–355, 356–395, and 413–452; these read GHRL…RTLK, GHTK…KNIK, GHDH…CTKT, GHAE…TKVE, LDPN…KTLT, GHDN…CTRT, and IEAP…KIWT.

The protein belongs to the WD repeat LIS1/nudF family. As to quaternary structure, self-associates. Interacts with NDL1 and dynein.

Its subcellular location is the cytoplasm. It localises to the cytoskeleton. It is found in the spindle pole. In terms of biological role, positively regulates the activity of the minus-end directed microtubule motor protein dynein. May enhance dynein-mediated microtubule sliding by targeting dynein to the microtubule plus end. Required for nuclear migration during vegetative growth as well as development. Required for localization of dynein to the mitotic spindle poles. Recruits additional proteins to the dynein complex at SPBs. Required for retrograde early endosome (EE) transport from the hyphal tip. This Mycosarcoma maydis (Corn smut fungus) protein is Nuclear distribution protein PAC1.